The following is a 170-amino-acid chain: Glycine cleavage system H protein, mitochondrial (170 aa).

Residues 1–47 constitute a mitochondrion transit peptide; the sequence is MLRTTRLWTTRMPTVSKLFLRNSSGNALNKNKLPFLYSSQGPQAVRY. The 83-residue stretch at 61-143 folds into the Lipoyl-binding domain; the sequence is TAFVGITKYA…MGDGWLVKMK (83 aa). Position 102 is an N6-lipoyllysine (K102).

It belongs to the GcvH family. In terms of assembly, component of the glycine decarboxylase complex (GDC), which is composed of four proteins: P, T, L and H. (R)-lipoate is required as a cofactor.

The protein localises to the mitochondrion. In terms of biological role, the glycine cleavage system (glycine decarboxylase complex) catalyzes the degradation of glycine. The H protein shuttles the methylamine group of glycine from the P protein to the T protein. The chain is Glycine cleavage system H protein, mitochondrial (GCV3) from Saccharomyces cerevisiae (strain ATCC 204508 / S288c) (Baker's yeast).